Consider the following 221-residue polypeptide: 7-cyano-7-deazaguanine synthase (221 aa).

7–17 (LSGGMDSSTLA) contributes to the ATP binding site. Residues cysteine 187, cysteine 195, cysteine 198, and cysteine 201 each coordinate Zn(2+).

Belongs to the QueC family. Requires Zn(2+) as cofactor.

The catalysed reaction is 7-carboxy-7-deazaguanine + NH4(+) + ATP = 7-cyano-7-deazaguanine + ADP + phosphate + H2O + H(+). The protein operates within purine metabolism; 7-cyano-7-deazaguanine biosynthesis. Its function is as follows. Catalyzes the ATP-dependent conversion of 7-carboxy-7-deazaguanine (CDG) to 7-cyano-7-deazaguanine (preQ(0)). This chain is 7-cyano-7-deazaguanine synthase, found in Methanosphaerula palustris (strain ATCC BAA-1556 / DSM 19958 / E1-9c).